Here is a 177-residue protein sequence, read N- to C-terminus: Alkyl hydroperoxide reductase AhpD (177 aa).

The active-site Proton donor is the C131. C131 and C134 are joined by a disulfide. C134 acts as the Cysteine sulfenic acid (-SOH) intermediate in catalysis.

The protein belongs to the AhpD family. In terms of assembly, homotrimer.

It carries out the reaction N(6)-[(R)-dihydrolipoyl]-L-lysyl-[lipoyl-carrier protein] + a hydroperoxide = N(6)-[(R)-lipoyl]-L-lysyl-[lipoyl-carrier protein] + an alcohol + H2O. Antioxidant protein with alkyl hydroperoxidase activity. Required for the reduction of the AhpC active site cysteine residues and for the regeneration of the AhpC enzyme activity. This chain is Alkyl hydroperoxide reductase AhpD, found in Streptomyces griseus subsp. griseus (strain JCM 4626 / CBS 651.72 / NBRC 13350 / KCC S-0626 / ISP 5235).